Reading from the N-terminus, the 227-residue chain is ATP-dependent Clp protease proteolytic subunit 1 (227 aa).

Residue serine 124 is the Nucleophile of the active site. Histidine 149 is a catalytic residue.

This sequence belongs to the peptidase S14 family. In terms of assembly, fourteen ClpP subunits assemble into 2 heptameric rings which stack back to back to give a disk-like structure with a central cavity, resembling the structure of eukaryotic proteasomes.

It localises to the cytoplasm. It catalyses the reaction Hydrolysis of proteins to small peptides in the presence of ATP and magnesium. alpha-casein is the usual test substrate. In the absence of ATP, only oligopeptides shorter than five residues are hydrolyzed (such as succinyl-Leu-Tyr-|-NHMec, and Leu-Tyr-Leu-|-Tyr-Trp, in which cleavage of the -Tyr-|-Leu- and -Tyr-|-Trp bonds also occurs).. Functionally, cleaves peptides in various proteins in a process that requires ATP hydrolysis. Has a chymotrypsin-like activity. Plays a major role in the degradation of misfolded proteins. This chain is ATP-dependent Clp protease proteolytic subunit 1, found in Rhodopirellula baltica (strain DSM 10527 / NCIMB 13988 / SH1).